A 169-amino-acid polypeptide reads, in one-letter code: MPLLDSFTVDHTRMNAPAVRVAKHMSTPKGDAITVFDLRFCAPNKDILSERGIHTLEHLFAGFMRDHLNGSDVEIIDISPMGCRTGFYMSLIGEPSERQVADAWLASMEDVLKVVEQSEIPELNEYQCGTYQMHSLEQAQDIARNIIAAGVSVNRNDDLKLSDEILGKL.

Residues histidine 54, histidine 58, and cysteine 128 each coordinate Fe cation.

It belongs to the LuxS family. As to quaternary structure, homodimer. It depends on Fe cation as a cofactor.

It catalyses the reaction S-(5-deoxy-D-ribos-5-yl)-L-homocysteine = (S)-4,5-dihydroxypentane-2,3-dione + L-homocysteine. Its function is as follows. Involved in the synthesis of autoinducer 2 (AI-2) which is secreted by bacteria and is used to communicate both the cell density and the metabolic potential of the environment. The regulation of gene expression in response to changes in cell density is called quorum sensing. Catalyzes the transformation of S-ribosylhomocysteine (RHC) to homocysteine (HC) and 4,5-dihydroxy-2,3-pentadione (DPD). In Shewanella sp. (strain MR-4), this protein is S-ribosylhomocysteine lyase.